The sequence spans 478 residues: Probable glucan endo-1,3-beta-glucosidase A6 (478 aa).

An N-terminal signal peptide occupies residues 1-20 (MSLLAFFLFTILVFSSSCCS). The Proton donor role is filled by E135. E280 serves as the catalytic Nucleophile. C390 and C453 form a disulfide bridge.

Belongs to the glycosyl hydrolase 17 family. In terms of processing, contains two additional disulfide bonds, but it is unclear if they are between the pairs Cys-409-Cys-416 and Cys-425-Cys-471 or between the pairs Cys-409-Cys-471 and Cys-416-Cys-425. In terms of tissue distribution, anthers.

The catalysed reaction is Hydrolysis of (1-&gt;3)-beta-D-glucosidic linkages in (1-&gt;3)-beta-D-glucans.. In terms of biological role, probable beta-1,3-glucanase that may be involved in the degradation of callose walls around the microspore tetrad during pollen development. May be required for pollen exine formation. This is Probable glucan endo-1,3-beta-glucosidase A6 from Arabidopsis thaliana (Mouse-ear cress).